The following is a 141-amino-acid chain: MQLTSFTDYGLRALIYMASLPDGRMTSISEVTEVYGVSRNHMVKIINQLSRAGFVTAVRGKNGGIRLGKPANTICIGDVVRELEPLSLVNCSSEFCHITPACRLKQALSKAVQSFLKELDNYTLADLVEENQPLYKLLLVE.

In terms of domain architecture, HTH rrf2-type spans 2-129 (QLTSFTDYGL…DNYTLADLVE (128 aa)). The H-T-H motif DNA-binding region spans 28–51 (ISEVTEVYGVSRNHMVKIINQLSR). C91, C96, and C102 together coordinate [2Fe-2S] cluster.

It depends on [2Fe-2S] cluster as a cofactor.

Functionally, nitric oxide-sensitive repressor of genes involved in protecting the cell against nitrosative stress. May require iron for activity. This chain is HTH-type transcriptional repressor NsrR, found in Salmonella choleraesuis (strain SC-B67).